A 105-amino-acid polypeptide reads, in one-letter code: Large ribosomal subunit protein uL24 (105 aa).

The protein belongs to the universal ribosomal protein uL24 family. In terms of assembly, part of the 50S ribosomal subunit.

Its function is as follows. One of two assembly initiator proteins, it binds directly to the 5'-end of the 23S rRNA, where it nucleates assembly of the 50S subunit. Functionally, one of the proteins that surrounds the polypeptide exit tunnel on the outside of the subunit. This Nitrosococcus oceani (strain ATCC 19707 / BCRC 17464 / JCM 30415 / NCIMB 11848 / C-107) protein is Large ribosomal subunit protein uL24.